The primary structure comprises 149 residues: 3-dehydroquinate dehydratase (149 aa).

Tyrosine 24 acts as the Proton acceptor in catalysis. Substrate contacts are provided by asparagine 76, histidine 82, and aspartate 89. The active-site Proton donor is histidine 102. Substrate-binding positions include 103-104 (LS) and arginine 113.

It belongs to the type-II 3-dehydroquinase family. In terms of assembly, homododecamer.

The catalysed reaction is 3-dehydroquinate = 3-dehydroshikimate + H2O. It functions in the pathway metabolic intermediate biosynthesis; chorismate biosynthesis; chorismate from D-erythrose 4-phosphate and phosphoenolpyruvate: step 3/7. Its function is as follows. Catalyzes a trans-dehydration via an enolate intermediate. This Acinetobacter baylyi (strain ATCC 33305 / BD413 / ADP1) protein is 3-dehydroquinate dehydratase.